The chain runs to 63 residues: Large ribosomal subunit protein bL28 (63 aa).

Belongs to the bacterial ribosomal protein bL28 family.

This Clostridium kluyveri (strain NBRC 12016) protein is Large ribosomal subunit protein bL28.